A 266-amino-acid chain; its full sequence is 5'-nucleotidase SurE (266 aa).

Residues D8, D9, S39, and N95 each coordinate a divalent metal cation.

The protein belongs to the SurE nucleotidase family. Requires a divalent metal cation as cofactor.

It localises to the cytoplasm. The enzyme catalyses a ribonucleoside 5'-phosphate + H2O = a ribonucleoside + phosphate. Functionally, nucleotidase that shows phosphatase activity on nucleoside 5'-monophosphates. The chain is 5'-nucleotidase SurE from Syntrophus aciditrophicus (strain SB).